Reading from the N-terminus, the 384-residue chain is GDP-mannose transporter (384 aa).

The Cytoplasmic portion of the chain corresponds to 1–40; it reads MVEDKKTDDYTIEMDKMDQGSKNFEAAAPPPQPRTPPAGS. A helical membrane pass occupies residues 41 to 61; sequence ISNNPILPVLAYCGSSILMTV. Over 62–69 the chain is Lumenal; sequence MNKYVLSG. The helical transmembrane segment at 70–90 threads the bilayer; it reads LDFNLNFFLLCVQSIVCIVAI. Over 91–110 the chain is Cytoplasmic; it reads QTCKSCGLITYRDFSADEAR. The chain crosses the membrane as a helical span at residues 111 to 127; that stretch reads KWFPITLLLIGMIYTGS. The Lumenal segment spans residues 128–134; it reads KALQFLS. The chain crosses the membrane as a helical span at residues 135–151; the sequence is IPVYTIFKNLTIILIAY. Topologically, residues 152-160 are cytoplasmic; sequence GEVLWFGGS. Residues 161–182 traverse the membrane as a helical segment; it reads VTGLTLFSFGLMVLSSIIAAWA. The Lumenal segment spans residues 183 to 200; the sequence is DIKHAVESTGDATAKVST. The chain crosses the membrane as a helical span at residues 201–221; that stretch reads LNAGYIWMLVNCLCTSSYVLG. Topologically, residues 222 to 236 are cytoplasmic; it reads MRKRIKLTNFKDFDT. Residues 237–257 form a helical membrane-spanning segment; that stretch reads LAMFYNNLLSIPVLIVLTGLM. Over 258 to 276 the chain is Lumenal; sequence EDWSSANITRNFPPADRNN. Asn-264 carries N-linked (GlcNAc...) asparagine glycosylation. The helical transmembrane segment at 277–297 threads the bilayer; that stretch reads IIFAMILSGLSSVFISYTSAW. The Cytoplasmic segment spans residues 298–305; the sequence is CVRVTSST. Residues 306–326 form a helical membrane-spanning segment; that stretch reads TYSMVGALNKLPIALSGLIFF. At 327 to 329 the chain is on the lumenal side; the sequence is DAP. The helical transmembrane segment at 330–350 threads the bilayer; that stretch reads VTFPSVSAIVVGFVSGIVYAV. Over 351-384 the chain is Cytoplasmic; sequence AKIKQNAKPKTGVLPMSNPPVSASSQSMRDSLRS. The segment at 364–384 is disordered; sequence LPMSNPPVSASSQSMRDSLRS. The segment covering 369–384 has biased composition (polar residues); it reads PPVSASSQSMRDSLRS.

It belongs to the TPT transporter family. SLC35D subfamily. In terms of assembly, homooligomer.

The protein resides in the golgi apparatus membrane. It is found in the cytoplasmic vesicle membrane. It localises to the endoplasmic reticulum membrane. Functionally, involved in the import of GDP-mannose from the cytoplasm into the Golgi lumen. In Aspergillus terreus (strain NIH 2624 / FGSC A1156), this protein is GDP-mannose transporter (gmt1).